The following is a 413-amino-acid chain: MKIYLVGGAVRDALLGLPVKDKDWVVVGATPQEMLDAGYQQVGRDFPVFLHPQTREEYALARTERKSGSGYTGFTCYAAPDVTLEEDLQRRDLTINALAQDDDGHIVDPYQGRRDLDNRLLRHVSPAFSEDPLRVLRVARFAARYAHLSFRIADETLALMRDMTAAGELEHLTPERVWKETENALTTRNPQVFFQVLRDCGALRVLFPEVDALFGVPAPAKWHPEIDTGIHTLMTLSMAAMLSPNVDVRFATLCHDLGKGLTPKALWPRHHGHGPAGVKLVEQLCQRLRVPNEIRDLAKLVAEFHDLIHTFPILQPKTIVKLFDSIDAWRKPQRVEQIALTSEADVRGRTGFEASDYPQGRWLREAWLVAQAVPTKEVVEAGFKGAEIREELTRRRIAAVANWKERRCPKPEA.

ATP-binding residues include G8 and R11. Residues G8 and R11 each coordinate CTP. Mg(2+) is bound by residues D21 and D23. ATP-binding residues include R91, R137, and R140. CTP is bound by residues R91, R137, and R140. An HD domain is found at 228 to 329; the sequence is TGIHTLMTLS…VKLFDSIDAW (102 aa).

It belongs to the tRNA nucleotidyltransferase/poly(A) polymerase family. Bacterial CCA-adding enzyme type 1 subfamily. Monomer. Can also form homodimers and oligomers. Requires Mg(2+) as cofactor. The cofactor is Ni(2+).

The enzyme catalyses a tRNA precursor + 2 CTP + ATP = a tRNA with a 3' CCA end + 3 diphosphate. The catalysed reaction is a tRNA with a 3' CCA end + 2 CTP + ATP = a tRNA with a 3' CCACCA end + 3 diphosphate. Functionally, catalyzes the addition and repair of the essential 3'-terminal CCA sequence in tRNAs without using a nucleic acid template. Adds these three nucleotides in the order of C, C, and A to the tRNA nucleotide-73, using CTP and ATP as substrates and producing inorganic pyrophosphate. tRNA 3'-terminal CCA addition is required both for tRNA processing and repair. Also involved in tRNA surveillance by mediating tandem CCA addition to generate a CCACCA at the 3' terminus of unstable tRNAs. While stable tRNAs receive only 3'-terminal CCA, unstable tRNAs are marked with CCACCA and rapidly degraded. This chain is Multifunctional CCA protein, found in Citrobacter koseri (strain ATCC BAA-895 / CDC 4225-83 / SGSC4696).